A 92-amino-acid chain; its full sequence is Large ribosomal subunit protein eL43 (92 aa).

The segment at 39–60 (CSFCGKKTVRRGAAGIWSCHSC) adopts a C4-type zinc-finger fold.

It belongs to the eukaryotic ribosomal protein eL43 family.

This chain is Large ribosomal subunit protein eL43 (RPL43), found in Candida glabrata (strain ATCC 2001 / BCRC 20586 / JCM 3761 / NBRC 0622 / NRRL Y-65 / CBS 138) (Yeast).